The sequence spans 249 residues: Large ribosomal subunit protein uL1 (249 aa).

It belongs to the universal ribosomal protein uL1 family. In terms of assembly, part of the 50S ribosomal subunit.

Its function is as follows. Binds directly to 23S rRNA. The L1 stalk is quite mobile in the ribosome, and is involved in E site tRNA release. Protein L1 is also a translational repressor protein, it controls the translation of the L11 operon by binding to its mRNA. The sequence is that of Large ribosomal subunit protein uL1 from Orientia tsutsugamushi (strain Ikeda) (Rickettsia tsutsugamushi).